The primary structure comprises 467 residues: tRNA-2-methylthio-N(6)-dimethylallyladenosine synthase (467 aa).

The tract at residues 1–20 (MSDDTTQIEPAMAQETSPRA) is disordered. Residues 23-143 (RKVFVKTYGC…LPNALARVRG (121 aa)) form the MTTase N-terminal domain. Residues Cys32, Cys68, Cys106, Cys184, Cys188, and Cys191 each contribute to the [4Fe-4S] cluster site. One can recognise a Radical SAM core domain in the interval 170 to 402 (RKRGVSAFLT…QALLSAQQYA (233 aa)). The region spanning 405–467 (DSMIGRKMDV…TNSLIAQKLA (63 aa)) is the TRAM domain.

This sequence belongs to the methylthiotransferase family. MiaB subfamily. Monomer. It depends on [4Fe-4S] cluster as a cofactor.

It localises to the cytoplasm. The enzyme catalyses N(6)-dimethylallyladenosine(37) in tRNA + (sulfur carrier)-SH + AH2 + 2 S-adenosyl-L-methionine = 2-methylsulfanyl-N(6)-dimethylallyladenosine(37) in tRNA + (sulfur carrier)-H + 5'-deoxyadenosine + L-methionine + A + S-adenosyl-L-homocysteine + 2 H(+). In terms of biological role, catalyzes the methylthiolation of N6-(dimethylallyl)adenosine (i(6)A), leading to the formation of 2-methylthio-N6-(dimethylallyl)adenosine (ms(2)i(6)A) at position 37 in tRNAs that read codons beginning with uridine. This chain is tRNA-2-methylthio-N(6)-dimethylallyladenosine synthase, found in Brucella abortus (strain S19).